A 158-amino-acid polypeptide reads, in one-letter code: Transcription elongation factor GreA (158 aa).

A coiled-coil region spans residues 47–74 (AEYHAAKEEQSHNEGRINELEDKLARAD).

The protein belongs to the GreA/GreB family.

Its function is as follows. Necessary for efficient RNA polymerase transcription elongation past template-encoded arresting sites. The arresting sites in DNA have the property of trapping a certain fraction of elongating RNA polymerases that pass through, resulting in locked ternary complexes. Cleavage of the nascent transcript by cleavage factors such as GreA or GreB allows the resumption of elongation from the new 3'terminus. GreA releases sequences of 2 to 3 nucleotides. This is Transcription elongation factor GreA from Rhodopseudomonas palustris (strain ATCC BAA-98 / CGA009).